Reading from the N-terminus, the 193-residue chain is CRIB domain-containing protein RIC5 (193 aa).

One can recognise a CRIB domain in the interval isoleucine 29–glycine 42. The segment at glycine 42–arginine 193 is disordered. The segment covering histidine 55–threonine 67 has biased composition (basic and acidic residues). A compositionally biased stretch (polar residues) spans serine 90 to proline 100. Residues glycine 123–leucine 134 show a composition bias toward low complexity.

Interacts with ARAC11/ROP1. In terms of tissue distribution, expressed in flowers and pollen.

The protein localises to the cell membrane. Functionally, functions as a downstream effector of Rho-related GTP binding proteins of the 'Rho of Plants' (ROPs) family. Participates in the propagation of ROP GTPase signals in specific cellular responses. Is involved in pollen tube growth regulation through its interaction with ARAC11/ROP1. This is CRIB domain-containing protein RIC5 (RIC5) from Arabidopsis thaliana (Mouse-ear cress).